Consider the following 514-residue polypeptide: MHTNKKYLHTSGDESVLKGYKPVIGLEIHAQIKSKSKLFSTSSTEFTNSMPNVNVTLFDASFPGTLPSLNEYCIRQAVKTGLAVGGKINLYSQFDRKHYFYPDLPLGYQITQQFYPLVSEGKLRIDIPQGDGTYKPKYIRIARIQVEQDSGKSVHDLDNTLIDLNRAGNPLMEIITYPDLNSSLEAELFVKKLQFMLRHIGTCDGNMEEGSLRCDVNVSVYNASAGDHPLSGTRCEVKNISSANNIPRAIDFEIKRHIELLTNGQKIEQQTRTFDAKKGETLLLRSKENIPDYKFFPDPDLPYVELTEDYVESVKTTIPSLPDDIVEKLTSEPYNLNFYDANILLTNNGGVEFFETILHDSRWSSKLNPKLVANWIASELMGLLNASEITLSDSPVSYIQIGSIVEAIQHEDISGKMAKKIIKIMFDEKSGEMALDIAEKNGWRQITDKNVIGELCDKIIAEHPTEVGNLRNGKENVFQFLVAQVIKLSKGNASPSLVNQILREKATNKPTTTD.

It belongs to the GatB/GatE family. GatB subfamily. Subunit of the heterotrimeric GatCAB amidotransferase (AdT) complex, composed of A, B and C subunits.

The protein localises to the mitochondrion. The enzyme catalyses L-glutamyl-tRNA(Gln) + L-glutamine + ATP + H2O = L-glutaminyl-tRNA(Gln) + L-glutamate + ADP + phosphate + H(+). In terms of biological role, allows the formation of correctly charged Gln-tRNA(Gln) through the transamidation of misacylated Glu-tRNA(Gln) in the mitochondria. The reaction takes place in the presence of glutamine and ATP through an activated gamma-phospho-Glu-tRNA(Gln). This chain is Glutamyl-tRNA(Gln) amidotransferase subunit B, mitochondrial, found in Naegleria gruberi (Amoeba).